A 507-amino-acid chain; its full sequence is Cytochrome P450 monooxygenase helB2 (507 aa).

The N-terminal stretch at 1 to 22 (MALPIILCLAVILWTSWRLLDA) is a signal peptide. C436 contacts heme.

Belongs to the cytochrome P450 family. Heme is required as a cofactor.

Its pathway is mycotoxin biosynthesis. Functionally, cytochrome P450 monooxygenase; part of the gene cluster that mediates the biosynthesis of helvolic acid, an antibacterial nortriterpenoid. Protostadienol synthase helA cyclizes (3S)-oxidosqualene to (17Z)-protosta-17(20),24-dien-3-beta-ol (protostadienol). The synthesis of protostadienol is followed by several steps of monooxygenation, dehydrogenation, and acyl transfer to yield the final helvolic acid. Following the cyclization to the tetracyclic protostadienol by helA, cytochrome P450 monooxygenases helB1-mediated and helB2-mediated oxidation at C-4 and C-16, acyltransferase helD2-dependent acetylation of 16-OH, oxidation of C-21 by cytochrome P450 monooxygenase helB4, and short chain dehydrogenase helC-dependent oxidative decarboxylation yield the fusidane skeleton. This intermediate is further modified in three additional steps mediated by the cytochrome P450 monooxygenase helB3, the acyltransferase helD1, and the 3-ketosteroid 1-dehydrogenase helE to give helvolic acid. Compared with the late stages in the biosynthesis of helvolic acid, enzymes involved in the early stage modifications act in a relatively strict order. The hydroxylation of C-16 by helB1 and subsequent acetylation by helD2 should occur before the helB3-mediated oxidation of C-21. C-4 demethylation in fusidane-type antibiotics proceeds in an unusual manner though it is also achieved by oxidative decarboxylation. The methyl group at C-4 beta position is oxidized by helB1 and subsequently removed by the short chain dehydrogenase helC. The chain is Cytochrome P450 monooxygenase helB2 from Aspergillus fumigatus (strain ATCC MYA-4609 / CBS 101355 / FGSC A1100 / Af293) (Neosartorya fumigata).